The primary structure comprises 520 residues: Sodium-dependent dicarboxylate transporter SdcS (520 aa).

14 helical membrane-spanning segments follow: residues 30 to 50 (AGQLIGLILGPLLFLLTLLFF), 55 to 75 (LPWKGVYVLAITLWIATWWIT), 77 to 97 (AIPIAATSLLPIVLLPLGHIL), 104 to 124 (SEYGNDIIFLFLGGFILAIAM), 160 to 180 (SMFVSNTAAVMIMIPIGLAII), 207 to 227 (IGYAGTIGGLGTLIGTPPLII), 242 to 262 (FAKWMIVGIPTVIVLLGITWL), 298 to 318 (KVVQTIFVLASLLWITREFLL), 323 to 343 (VTSSVADGTIAIFISILLFVI), 362 to 382 (ELPWGVLILFGGGLALAKGIS), 399 to 419 (GVSPILIVIVITIFVLFLTEV), 428 to 448 (MILPILATLSVAVGVHPLLLM), 452 to 472 (AMAANCAYMLPVGTPPNAIIF), and 491 to 511 (LISAIIIILVVYYVMPIVLGI).

This sequence belongs to the SLC13A/DASS transporter (TC 2.A.47) family. NADC subfamily.

It is found in the cell membrane. Its function is as follows. Mediates the transport of the dicarboxylates fumarate, malate, and succinate across the cytoplasmic membrane via a Na(+)-electrochemical gradient. The protein is Sodium-dependent dicarboxylate transporter SdcS (sdcS) of Staphylococcus aureus (strain MSSA476).